The primary structure comprises 209 residues: Urease accessory protein UreE (209 aa).

A compositionally biased stretch (basic and acidic residues) spans 170–196; that stretch reads EHHGHSHSHSHDHDHDHDHDHDHDHQH. The segment at 170–209 is disordered; the sequence is EHHGHSHSHSHDHDHDHDHDHDHDHQHGPSCSHGHHHGHR.

Belongs to the UreE family.

It localises to the cytoplasm. Involved in urease metallocenter assembly. Binds nickel. Probably functions as a nickel donor during metallocenter assembly. The chain is Urease accessory protein UreE from Burkholderia mallei (strain NCTC 10247).